Reading from the N-terminus, the 147-residue chain is Large ribosomal subunit protein uL13 (147 aa).

Belongs to the universal ribosomal protein uL13 family. In terms of assembly, part of the 50S ribosomal subunit.

Its function is as follows. This protein is one of the early assembly proteins of the 50S ribosomal subunit, although it is not seen to bind rRNA by itself. It is important during the early stages of 50S assembly. The polypeptide is Large ribosomal subunit protein uL13 (Paenarthrobacter aurescens (strain TC1)).